Consider the following 269-residue polypeptide: Regulatory protein RecX (269 aa).

It belongs to the RecX family.

The protein resides in the cytoplasm. Functionally, modulates RecA activity. In Geobacillus kaustophilus (strain HTA426), this protein is Regulatory protein RecX.